We begin with the raw amino-acid sequence, 517 residues long: Protein AGENET DOMAIN (AGD)-CONTAINING P1 (517 aa).

The disordered stretch occupies residues 1-35 (MLRPRRSLGVSSPAKQRKKAAPKNSMATRANRKRL). 2 plant Agenet, chromatin-binding regions span residues 37 to 111 (SYLK…PPMS) and 117 to 173 (KKIV…EWVD). The tract at residues 177-202 (KPPLEETEEEEDESEEDKLDDSEDEE) is disordered. The segment covering 181 to 202 (EETEEEEDESEEDKLDDSEDEE) has biased composition (acidic residues). Plant Agenet, chromatin-binding regions lie at residues 219–287 (QMFS…PRDE), 289–345 (IDFA…DWVD), 378–446 (QAFS…LESV), and 449–505 (SPFE…EWID).

Expressed ubiquitously during vegetative stage, in meristems (e.g. root tips and shoot apical meristem), and in ovules and young seeds during reproductive stage.

The protein resides in the nucleus. Its function is as follows. Heterochromatin-binding protein that preferentially occupies long transposons and specifically recognizes the histone H3 'Lys-9' methylation (H3K9me) marks, with a stronger affinity for dimethylated H3K9 (H3K9me2). Required for transcriptional silencing, non-CG DNA methylation (e.g. CHG and CHH regions), and H3K9 dimethylation (H3K9me2) at some loci. Mediates heterochromatin phase separation and chromocenter formation. In Arabidopsis thaliana (Mouse-ear cress), this protein is Protein AGENET DOMAIN (AGD)-CONTAINING P1.